A 363-amino-acid chain; its full sequence is Putative agmatine deiminase 1 (363 aa).

Cys356 functions as the Amidino-cysteine intermediate in the catalytic mechanism.

This sequence belongs to the agmatine deiminase family.

The enzyme catalyses agmatine + H2O = N-carbamoylputrescine + NH4(+). In Listeria monocytogenes serovar 1/2a (strain ATCC BAA-679 / EGD-e), this protein is Putative agmatine deiminase 1.